The following is a 323-amino-acid chain: Probable cell division protein WhiA (323 aa).

Residues threonine 275 to serine 309 constitute a DNA-binding region (H-T-H motif).

This sequence belongs to the WhiA family.

Involved in cell division and chromosome segregation. The sequence is that of Probable cell division protein WhiA from Listeria monocytogenes serotype 4b (strain CLIP80459).